The following is a 50-amino-acid chain: Large ribosomal subunit protein bL33B (50 aa).

It belongs to the bacterial ribosomal protein bL33 family.

This Streptococcus pyogenes serotype M1 protein is Large ribosomal subunit protein bL33B.